Here is a 231-residue protein sequence, read N- to C-terminus: MLHLDRLLIRQGDFTLRADATACAGERIAVIGPSGGGKSTLLMAIAGFLAPAEGRILWQGRDLGPLGPGERQVSLLFQDQNLFPHLTLRENLGLGISPALRLAAGDRARIAEALERVGLAGLGEAKPGRLSGGQQGRAALARALLRARPILLLDEPFAALGPALKAEMLALVSEIAAETGATVLMVTHDPEDARRFAHRTILVADGRAEAPQPTAALFADPPPALRAYLGP.

An ABC transporter domain is found at 2 to 230 (LHLDRLLIRQ…PPPALRAYLG (229 aa)). Residue 32-39 (GPSGGGKS) participates in ATP binding.

This sequence belongs to the ABC transporter superfamily. Thiamine importer (TC 3.A.1.19.1) family. As to quaternary structure, the complex is composed of two ATP-binding proteins (ThiQ), two transmembrane proteins (ThiP) and a solute-binding protein (ThiB).

It localises to the cell inner membrane. The catalysed reaction is thiamine(out) + ATP + H2O = thiamine(in) + ADP + phosphate + H(+). In terms of biological role, part of the ABC transporter complex ThiBPQ involved in thiamine import. Responsible for energy coupling to the transport system. This chain is Thiamine import ATP-binding protein ThiQ, found in Cereibacter sphaeroides (strain ATCC 17023 / DSM 158 / JCM 6121 / CCUG 31486 / LMG 2827 / NBRC 12203 / NCIMB 8253 / ATH 2.4.1.) (Rhodobacter sphaeroides).